A 278-amino-acid chain; its full sequence is NH(3)-dependent NAD(+) synthetase (278 aa).

Residue Gly39–Ser46 participates in ATP binding. Asp45 is a binding site for Mg(2+). Arg121 is a deamido-NAD(+) binding site. ATP is bound at residue Thr141. Position 146 (Glu146) interacts with Mg(2+). Residues Lys154 and Asp161 each contribute to the deamido-NAD(+) site. The ATP site is built by Lys170 and Ser192. His252–Lys253 serves as a coordination point for deamido-NAD(+).

The protein belongs to the NAD synthetase family. Homodimer.

The enzyme catalyses deamido-NAD(+) + NH4(+) + ATP = AMP + diphosphate + NAD(+) + H(+). The protein operates within cofactor biosynthesis; NAD(+) biosynthesis; NAD(+) from deamido-NAD(+) (ammonia route): step 1/1. In terms of biological role, catalyzes the ATP-dependent amidation of deamido-NAD to form NAD. Uses ammonia as a nitrogen source. This Saccharolobus solfataricus (strain ATCC 35092 / DSM 1617 / JCM 11322 / P2) (Sulfolobus solfataricus) protein is NH(3)-dependent NAD(+) synthetase.